Consider the following 419-residue polypeptide: UDP-N-acetylglucosamine 1-carboxyvinyltransferase (419 aa).

Residue 22–23 participates in phosphoenolpyruvate binding; sequence KN. Position 91 (Arg91) interacts with UDP-N-acetyl-alpha-D-glucosamine. Cys115 (proton donor) is an active-site residue. Position 115 is a 2-(S-cysteinyl)pyruvic acid O-phosphothioketal (Cys115). Residues 120–124, 160–163, Asp305, and Val327 contribute to the UDP-N-acetyl-alpha-D-glucosamine site; these read RPVDL and KVSV.

The protein belongs to the EPSP synthase family. MurA subfamily.

It is found in the cytoplasm. It carries out the reaction phosphoenolpyruvate + UDP-N-acetyl-alpha-D-glucosamine = UDP-N-acetyl-3-O-(1-carboxyvinyl)-alpha-D-glucosamine + phosphate. It functions in the pathway cell wall biogenesis; peptidoglycan biosynthesis. Cell wall formation. Adds enolpyruvyl to UDP-N-acetylglucosamine. The sequence is that of UDP-N-acetylglucosamine 1-carboxyvinyltransferase from Escherichia coli O157:H7.